Consider the following 965-residue polypeptide: 26S proteasome non-ATPase regulatory subunit 1 (965 aa).

PC repeat units follow at residues 380–413 (NAVASLGLIHHGQESSAMKVLEPYLPKESVEGFG), 418–452 (GAMLAYGLIHAKHGDATAMSTLAQWLKTAENEPVR), 454–488 (GACLGFGVAGLGSSSVSNYEKVREVLQRDEAVSGE), 489–523 (SAGIAMGLIMAGHLNQEVFNELKQYTVDTQHDKTQ), 560–595 (TGICMLSMAYAGTGSPDVVRRLLEKVATDPNLDVKR), 630–664 (GAAMALGIACAGTGNMEAIALIEPMISDKEGFVRK), 665–706 (GALL…SLVK), and 708–738 (GAIIAQGLLDIGGQNAAVTMQNSDKQPDMGS). Residues 836-856 (ASASSAAAAPSSSSTSGTAPA) are compositionally biased toward low complexity. Disordered regions lie at residues 836–889 (ASAS…LQNP) and 943–965 (TPASSGNTENKPHSTFEININDF). Positions 863 to 882 (EVDQPGKSKKEKAPEKDTKP) are enriched in basic and acidic residues.

This sequence belongs to the proteasome subunit S1 family.

Acts as a regulatory subunit of the 26 proteasome which is involved in the ATP-dependent degradation of ubiquitinated proteins. This is 26S proteasome non-ATPase regulatory subunit 1 (rpn-2) from Caenorhabditis elegans.